Here is a 268-residue protein sequence, read N- to C-terminus: uncharacterized protein (268 aa).

This sequence belongs to the glycosyltransferase 2 family.

This is an uncharacterized protein from Bacillus subtilis (strain 168).